A 968-amino-acid polypeptide reads, in one-letter code: RNA polymerase-associated protein RapA (968 aa).

One can recognise a Helicase ATP-binding domain in the interval E163–D332. An ATP-binding site is contributed by D176 to T183. A DEAH box motif is present at residues D278 to H281. The Helicase C-terminal domain occupies R491–L655.

This sequence belongs to the SNF2/RAD54 helicase family. RapA subfamily. In terms of assembly, interacts with the RNAP. Has a higher affinity for the core RNAP than for the holoenzyme. Its ATPase activity is stimulated by binding to RNAP.

Its function is as follows. Transcription regulator that activates transcription by stimulating RNA polymerase (RNAP) recycling in case of stress conditions such as supercoiled DNA or high salt concentrations. Probably acts by releasing the RNAP, when it is trapped or immobilized on tightly supercoiled DNA. Does not activate transcription on linear DNA. Probably not involved in DNA repair. The sequence is that of RNA polymerase-associated protein RapA from Shewanella baltica (strain OS223).